Here is a 201-residue protein sequence, read N- to C-terminus: Recombination protein RecR (201 aa).

The C4-type zinc-finger motif lies at 60–75 (CSCCGNVDTIDPCTVC). The Toprim domain occupies 83–178 (AVIIVVEDVA…RITRLAHGVP (96 aa)).

Belongs to the RecR family.

In terms of biological role, may play a role in DNA repair. It seems to be involved in an RecBC-independent recombinational process of DNA repair. It may act with RecF and RecO. The polypeptide is Recombination protein RecR (Rhizobium meliloti (strain 1021) (Ensifer meliloti)).